The primary structure comprises 267 residues: Cell division protein FtsQ (267 aa).

The Cytoplasmic portion of the chain corresponds to 1–32 (MRKKTSSNKKKQTKKTNNISLRRKLGLMYKKA). The helical transmembrane segment at 33-53 (ILGLKIALIIFVCLFVFTKYF) threads the bilayer. At 54–267 (AGIKTYLTTN…DKNKYYIEKY (214 aa)) the chain is on the periplasmic side. Positions 73–141 (FKLENVIIEG…NTVYIKLFER (69 aa)) constitute a POTRA domain.

This sequence belongs to the FtsQ/DivIB family. FtsQ subfamily.

It localises to the cell inner membrane. Functionally, essential cell division protein. The polypeptide is Cell division protein FtsQ (Rickettsia conorii (strain ATCC VR-613 / Malish 7)).